The primary structure comprises 133 residues: Ribosome-binding factor A (133 aa).

Belongs to the RbfA family. As to quaternary structure, monomer. Binds 30S ribosomal subunits, but not 50S ribosomal subunits or 70S ribosomes.

Its subcellular location is the cytoplasm. One of several proteins that assist in the late maturation steps of the functional core of the 30S ribosomal subunit. Associates with free 30S ribosomal subunits (but not with 30S subunits that are part of 70S ribosomes or polysomes). Required for efficient processing of 16S rRNA. May interact with the 5'-terminal helix region of 16S rRNA. The polypeptide is Ribosome-binding factor A (Salmonella typhi).